Consider the following 430-residue polypeptide: Adenylosuccinate synthetase (430 aa).

GTP is bound by residues 11–17 (GDEGKGK) and 39–41 (GHS). The active-site Proton acceptor is Asp12. Mg(2+)-binding residues include Asp12 and Gly39. IMP contacts are provided by residues 12-15 (DEGK), 37-40 (NAGH), Thr129, Arg143, Asn221, Thr236, and Arg300. The Proton donor role is filled by His40. 296-302 (VSTGRKR) contributes to the substrate binding site. GTP-binding positions include Arg302, 328–330 (KLD), and 412–414 (GTG).

The protein belongs to the adenylosuccinate synthetase family. In terms of assembly, homodimer. The cofactor is Mg(2+).

It localises to the cytoplasm. The enzyme catalyses IMP + L-aspartate + GTP = N(6)-(1,2-dicarboxyethyl)-AMP + GDP + phosphate + 2 H(+). Its pathway is purine metabolism; AMP biosynthesis via de novo pathway; AMP from IMP: step 1/2. In terms of biological role, plays an important role in the de novo pathway and in the salvage pathway of purine nucleotide biosynthesis. Catalyzes the first committed step in the biosynthesis of AMP from IMP. This Neurospora crassa (strain ATCC 24698 / 74-OR23-1A / CBS 708.71 / DSM 1257 / FGSC 987) protein is Adenylosuccinate synthetase.